We begin with the raw amino-acid sequence, 430 residues long: Methylthioribose kinase 1 (430 aa).

Residues 52 to 56 (DGNLN), K71, and 125 to 127 (RYI) each bind ATP. Position 56 (N56) interacts with substrate. D246 provides a ligand contact to substrate. Position 263-265 (263-265 (DPE)) interacts with ATP. R373 contributes to the substrate binding site.

This sequence belongs to the methylthioribose kinase family. Homodimer.

The catalysed reaction is 5-(methylsulfanyl)-D-ribose + ATP = 5-(methylsulfanyl)-alpha-D-ribose 1-phosphate + ADP + H(+). It participates in amino-acid biosynthesis; L-methionine biosynthesis via salvage pathway; S-methyl-5-thio-alpha-D-ribose 1-phosphate from S-methyl-5'-thioadenosine (hydrolase route): step 2/2. Functionally, catalyzes the phosphorylation of methylthioribose into methylthioribose-1-phosphate. This chain is Methylthioribose kinase 1, found in Oryza sativa subsp. japonica (Rice).